A 450-amino-acid polypeptide reads, in one-letter code: Regulator of sigma-E protease RseP (450 aa).

A helical membrane pass occupies residues 1–21 (MLSILWNLAAFIIALGVLITV). A Zn(2+)-binding site is contributed by His-22. Topologically, residues 22-103 (HEFGHFWVAR…VGQRAAIIAA (82 aa)) are periplasmic. The active site involves Glu-23. Position 26 (His-26) interacts with Zn(2+). A helical membrane pass occupies residues 104-124 (GPVANFIFAIFAYWLVFIIGV). PDZ domains are found at residues 115-186 (AYWL…APFG) and 199-291 (HWAF…TPDT). Topologically, residues 125–375 (PGVRPVIGEI…QGAGMSAEFG (251 aa)) are cytoplasmic. The chain crosses the membrane as a helical span at residues 376–396 (VIYYLMFLALISVNLGIINLF). Over 397–429 (PLPVLDGGHLLFLAIEKLKGGPVSERVQDFSYR) the chain is Periplasmic. Residues 430–450 (IGSILLVLLMGLALFNDFSRL) form a helical membrane-spanning segment.

It belongs to the peptidase M50B family. Zn(2+) serves as cofactor.

The protein localises to the cell inner membrane. Its function is as follows. A site-2 regulated intramembrane protease that cleaves the peptide bond between 'Ala-108' and 'Cys-109' in the transmembrane region of RseA. Part of a regulated intramembrane proteolysis (RIP) cascade. Acts on DegS-cleaved RseA to release the cytoplasmic domain of RseA. This provides the cell with sigma-E (RpoE) activity through the proteolysis of RseA. The polypeptide is Regulator of sigma-E protease RseP (rsep) (Salmonella typhimurium (strain 14028s / SGSC 2262)).